Consider the following 141-residue polypeptide: Large ribosomal subunit protein uL11 (141 aa).

This sequence belongs to the universal ribosomal protein uL11 family. Part of the ribosomal stalk of the 50S ribosomal subunit. Interacts with L10 and the large rRNA to form the base of the stalk. L10 forms an elongated spine to which L12 dimers bind in a sequential fashion forming a multimeric L10(L12)X complex. One or more lysine residues are methylated.

Its function is as follows. Forms part of the ribosomal stalk which helps the ribosome interact with GTP-bound translation factors. This chain is Large ribosomal subunit protein uL11, found in Bacillus cereus (strain ATCC 10987 / NRS 248).